The chain runs to 250 residues: Sugar fermentation stimulation protein homolog (250 aa).

The protein belongs to the SfsA family.

The sequence is that of Sugar fermentation stimulation protein homolog from Trichodesmium erythraeum (strain IMS101).